Reading from the N-terminus, the 365-residue chain is Probable protein kinase At2g41970 (365 aa).

The segment at 1 to 50 (MFCCGGADEEPAGPPANQYAAPPNKAGNPNFGGGNRGEPRNPNAPRSGAP) is disordered. Residues 73–354 (FGNKALIGEG…IVVKALQPLL (282 aa)) enclose the Protein kinase domain. ATP-binding positions include 79–87 (IGEGSYGRV) and lysine 100. Tyrosine 146 bears the Phosphotyrosine mark. Aspartate 204 functions as the Proton acceptor in the catalytic mechanism. Residues serine 208 and serine 238 each carry the phosphoserine modification. A phosphothreonine mark is found at threonine 239 and threonine 244. Tyrosine 252 bears the Phosphotyrosine mark.

The protein belongs to the protein kinase superfamily. Tyr protein kinase family.

The protein is Probable protein kinase At2g41970 of Arabidopsis thaliana (Mouse-ear cress).